The chain runs to 1127 residues: Nck-associated protein 1-like (1127 aa).

A disordered region spans residues 638–670 (KAKNKKTRKQRQTPRKGEPERDKPGAESHRKNR). Positions 639–651 (AKNKKTRKQRQTP) are enriched in basic residues. The span at 652–666 (RKGEPERDKPGAESH) shows a compositional bias: basic and acidic residues. Residues 996 to 1016 (VACLLLIFLAVSLPLLATDPS) traverse the membrane as a helical segment.

The protein belongs to the HEM-1/HEM-2 family. In terms of assembly, in hematopoietic cells, component of the WAVE2 complex composed of ABI1, CYFIP1/SRA1, NCKAP1L/HEM1 and WASF2/WAVE2. Interacts with ARHGAP4, PIK3C3/VPS34 and PPP1R12A/MYPT1. Interacts with mammalian target of rapamycin complex 2 (mTORC2) components, including MTOR and RICTOR. As to expression, expressed only in cells of hematopoietic origin. Expressed in neutrophils (at protein level). Expressed in T-cells (at protein level).

It localises to the cell membrane. The protein resides in the cytoplasm. Functionally, essential hematopoietic-specific regulator of the actin cytoskeleton. Controls lymphocyte development, activation, proliferation and homeostasis, erythrocyte membrane stability, as well as phagocytosis and migration by neutrophils and macrophages. Component of the WAVE2 complex which signals downstream of RAC to stimulate F-actin polymerization. Required for stabilization and/or translation of the WAVE2 complex proteins in hematopoietic cells. Within the WAVE2 complex, enables the cortical actin network to restrain excessive degranulation and granule release by T-cells. Required for efficient T-lymphocyte and neutrophil migration. Exhibits complex cycles of activation and inhibition to generate waves of propagating the assembly with actin. Also involved in mechanisms WAVE-independent to regulate myosin and actin polymerization during neutrophil chemotaxis. In T-cells, required for proper mechanistic target of rapamycin complex 2 (mTORC2)-dependent AKT phosphorylation, cell proliferation and cytokine secretion, including that of IL2 and TNF. In Homo sapiens (Human), this protein is Nck-associated protein 1-like.